Reading from the N-terminus, the 74-residue chain is CLAVATA3/ESR (CLE)-related protein 19 (74 aa).

Positions 1–24 (MKIKGLMILASSLLILAFIHQSES) are cleaved as a signal peptide. N-linked (GlcNAc...) asparagine glycans are attached at residues Asn34 and Asn54. A hydroxyproline mark is found at Pro65 and Pro68. A glycan (O-linked (Ara...) hydroxyproline) is linked at Pro68.

This sequence belongs to the CLV3/ESR signal peptide family. Post-translationally, the O-glycosylation (arabinosylation) of the hydroxyproline Pro-68 enhances binding affinity of the CLE19p peptide for its receptor. Mostly expressed in heart-shape embryos, pollen and young flower buds, and, to a lower extent, in inflorescence, leaves and roots.

It localises to the secreted. The protein localises to the extracellular space. In terms of biological role, extracellular signal peptide that regulates cell fate. Represses root apical meristem maintenance. The chain is CLAVATA3/ESR (CLE)-related protein 19 from Arabidopsis thaliana (Mouse-ear cress).